The chain runs to 280 residues: 1-cyclohexenylcarbonyl-CoA reductase (280 aa).

NADP(+)-binding positions include 22–25 (SRGI), 71–72 (DV), and N98. Catalysis depends on proton acceptor residues Y158 and K165. Residues K165 and 194–196 (IDS) each bind NADP(+).

The protein belongs to the short-chain dehydrogenases/reductases (SDR) family. In terms of assembly, homodimer.

It catalyses the reaction (4R,5R)-4,5-dihydroxycyclohex-2-ene-1-carbonyl-CoA + NADP(+) = (3R,4R)-3,4-dihydroxycyclohexa-1,5-diene-1-carbonyl-CoA + NADPH + H(+). The enzyme catalyses (3S)-3-hydroxycyclohexane-1-carbonyl-CoA + NADP(+) = (5S)-5-hydroxycyclohex-1-ene-1-carbonyl-CoA + NADPH + H(+). The catalysed reaction is cyclohexane-1-carbonyl-CoA + NADP(+) = cyclohex-1-ene-1-carbonyl-CoA + NADPH + H(+). Its pathway is antibiotic biosynthesis. Inhibited by the thiol inhibitors p-chloromercuribenzoate, N-ethylmaleimide and iodoacetamide. Also inhibited by various divalent cations. Involved in the biosynthesis of the antifungal antibiotic ansatrienin A (mycotrienin I). Catalyzes three of the reductive steps involved in the formation of the cyclohexanecarboxylic acid (CHC) moiety of ansatrienin from shikimic acid. Can use 3,4-dihydroxycyclohexa-1,5-diene-1-carbonyl-CoA, 5-hydroxycyclohex-1-ene-1-carbonyl-CoA and cyclohex-1-ene-1-carbonyl-CoA as substrates. The sequence is that of 1-cyclohexenylcarbonyl-CoA reductase from Streptomyces collinus.